Here is a 351-residue protein sequence, read N- to C-terminus: Peptide chain release factor 1 (351 aa).

Gln229 carries the N5-methylglutamine modification.

Belongs to the prokaryotic/mitochondrial release factor family. In terms of processing, methylated by PrmC. Methylation increases the termination efficiency of RF1.

Its subcellular location is the cytoplasm. In terms of biological role, peptide chain release factor 1 directs the termination of translation in response to the peptide chain termination codons UAG and UAA. This is Peptide chain release factor 1 from Dinoroseobacter shibae (strain DSM 16493 / NCIMB 14021 / DFL 12).